The sequence spans 175 residues: Crossover junction endodeoxyribonuclease RuvC (175 aa).

Active-site residues include Asp8, Glu69, and Asp141. Residues Asp8, Glu69, and Asp141 each coordinate Mg(2+).

It belongs to the RuvC family. Homodimer which binds Holliday junction (HJ) DNA. The HJ becomes 2-fold symmetrical on binding to RuvC with unstacked arms; it has a different conformation from HJ DNA in complex with RuvA. In the full resolvosome a probable DNA-RuvA(4)-RuvB(12)-RuvC(2) complex forms which resolves the HJ. Mg(2+) is required as a cofactor.

Its subcellular location is the cytoplasm. The enzyme catalyses Endonucleolytic cleavage at a junction such as a reciprocal single-stranded crossover between two homologous DNA duplexes (Holliday junction).. Its function is as follows. The RuvA-RuvB-RuvC complex processes Holliday junction (HJ) DNA during genetic recombination and DNA repair. Endonuclease that resolves HJ intermediates. Cleaves cruciform DNA by making single-stranded nicks across the HJ at symmetrical positions within the homologous arms, yielding a 5'-phosphate and a 3'-hydroxyl group; requires a central core of homology in the junction. The consensus cleavage sequence is 5'-(A/T)TT(C/G)-3'. Cleavage occurs on the 3'-side of the TT dinucleotide at the point of strand exchange. HJ branch migration catalyzed by RuvA-RuvB allows RuvC to scan DNA until it finds its consensus sequence, where it cleaves and resolves the cruciform DNA. The sequence is that of Crossover junction endodeoxyribonuclease RuvC from Colwellia psychrerythraea (strain 34H / ATCC BAA-681) (Vibrio psychroerythus).